A 331-amino-acid polypeptide reads, in one-letter code: Protoheme IX farnesyltransferase (331 aa).

A run of 8 helical transmembrane segments spans residues 63 to 83 (LACT…LNCL), 109 to 129 (SVFI…VSGV), 132 to 152 (LAAG…TAFL), 160 to 180 (IVFG…AAAG), 188 to 208 (WLFS…AILL), 215 to 235 (VGIP…AISV), 241 to 261 (VFLS…YGIL), and 294 to 314 (ILYM…VSIV).

The protein belongs to the UbiA prenyltransferase family. Protoheme IX farnesyltransferase subfamily.

Its subcellular location is the cell inner membrane. It catalyses the reaction heme b + (2E,6E)-farnesyl diphosphate + H2O = Fe(II)-heme o + diphosphate. Its pathway is porphyrin-containing compound metabolism; heme O biosynthesis; heme O from protoheme: step 1/1. In terms of biological role, converts heme B (protoheme IX) to heme O by substitution of the vinyl group on carbon 2 of heme B porphyrin ring with a hydroxyethyl farnesyl side group. This Prochlorococcus marinus (strain NATL2A) protein is Protoheme IX farnesyltransferase.